The chain runs to 272 residues: D-aminoacyl-tRNA deacylase (272 aa).

As to quaternary structure, monomer. Zn(2+) serves as cofactor.

The enzyme catalyses a D-aminoacyl-tRNA + H2O = a tRNA + a D-alpha-amino acid + H(+). The catalysed reaction is glycyl-tRNA(Ala) + H2O = tRNA(Ala) + glycine + H(+). It carries out the reaction D-tyrosyl-tRNA(Tyr) + H2O = D-tyrosine + tRNA(Tyr). Functionally, D-aminoacyl-tRNA deacylase with broad substrate specificity. By recycling D-aminoacyl-tRNA to D-amino acids and free tRNA molecules, this enzyme counteracts the toxicity associated with the formation of D-aminoacyl-tRNA entities in vivo. Catalyzes the hydrolysis of D-tyrosyl-tRNA(Tyr) and D-aspartyl-tRNA(Asp). The chain is D-aminoacyl-tRNA deacylase from Pyrococcus abyssi (strain GE5 / Orsay).